We begin with the raw amino-acid sequence, 296 residues long: Sulfotransferase 1C2 (296 aa).

Residue 49–54 participates in 3'-phosphoadenylyl sulfate binding; sequence KSGTTW. 107–109 is a binding site for substrate; sequence RTH. The active-site Proton acceptor is the histidine 109. 3'-phosphoadenylyl sulfate is bound by residues arginine 131, serine 139, tyrosine 194, and 228-233; that span reads TSFEKM. A Phosphoserine modification is found at serine 139. A Phosphoserine modification is found at serine 254. Position 256-260 (256-260) interacts with 3'-phosphoadenylyl sulfate; that stretch reads FMRKG.

This sequence belongs to the sulfotransferase 1 family. As to expression, highly expressed in kidney and at lower levels in stomach and liver. More specifically found in the epithelia of proximal tubules of the kidney, of the bile duct, of the gastric mucosa, and in hepatocytes.

The protein resides in the cytoplasm. The protein localises to the lysosome. It is found in the mitochondrion. The enzyme catalyses a phenol + 3'-phosphoadenylyl sulfate = an aryl sulfate + adenosine 3',5'-bisphosphate + H(+). It catalyses the reaction cholesterol + 3'-phosphoadenylyl sulfate = cholesterol sulfate + adenosine 3',5'-bisphosphate + H(+). In terms of biological role, sulfotransferase that utilizes 3'-phospho-5'-adenylyl sulfate (PAPS) to catalyze the sulfate conjugation of phenolic compounds. Does not transfer sulfate to steroids, dopamine, acetaminophen, or alpha-naphthol. Except in mitochondria, where it can add sulfate to cholesterol producing cholesterol sulfate, which alters mitochondrial membrane organization, and impacts protein complex mobility increasing state-III respiration, thereby modulating mitochondrial respiration. Catalyzes the sulfation of the carcinogenic N-hydroxy-2-acetylaminofluorene leading to highly reactive intermediates capable of forming DNA adducts, potentially resulting in mutagenesis. The sequence is that of Sulfotransferase 1C2 (Sult1c2) from Rattus norvegicus (Rat).